The primary structure comprises 382 residues: Lipid-A-disaccharide synthase (382 aa).

It belongs to the LpxB family.

It carries out the reaction 2-N,3-O-bis[(3R)-3-hydroxytetradecanoyl]-alpha-D-glucosaminyl 1-phosphate + UDP-2-N,3-O-bis[(3R)-3-hydroxytetradecanoyl]-alpha-D-glucosamine = lipid A disaccharide (E. coli) + UDP + H(+). The catalysed reaction is a lipid X + a UDP-2-N,3-O-bis[(3R)-3-hydroxyacyl]-alpha-D-glucosamine = a lipid A disaccharide + UDP + H(+). Its pathway is glycolipid biosynthesis; lipid IV(A) biosynthesis; lipid IV(A) from (3R)-3-hydroxytetradecanoyl-[acyl-carrier-protein] and UDP-N-acetyl-alpha-D-glucosamine: step 5/6. In terms of biological role, condensation of UDP-2,3-diacylglucosamine and 2,3-diacylglucosamine-1-phosphate to form lipid A disaccharide, a precursor of lipid A, a phosphorylated glycolipid that anchors the lipopolysaccharide to the outer membrane of the cell. The protein is Lipid-A-disaccharide synthase of Escherichia coli (strain 55989 / EAEC).